The sequence spans 1020 residues: Sodium/potassium-transporting ATPase subunit alpha-2 (1020 aa).

Residues 1–5 (MGRGA) constitute a propeptide that is removed on maturation. Residues 1–31 (MGRGAGREYSPAATTAENGGGKKKQKEKELD) are disordered. Topologically, residues 6-85 (GREYSPAATT…NALTPPPTTP (80 aa)) are cytoplasmic. Serine 10 is subject to Phosphoserine. The interval 80–82 (PPP) is interaction with phosphoinositide-3 kinase. The helical transmembrane segment at 86-106 (EWVKFCRQLFGGFSILLWIGA) threads the bilayer. Residues 107–129 (LLCFLAYGILAAMEDEPSNDNLY) lie on the Extracellular side of the membrane. The helical transmembrane segment at 130-150 (LGIVLAAVVIVTGCFSYYQEA) threads the bilayer. Over 151 to 286 (KSSKIMDSFK…VGQTPIAMEI (136 aa)) the chain is Cytoplasmic. Residues 212-227 (DNSSLTGESEPQTRSP) show a composition bias toward polar residues. Positions 212–231 (DNSSLTGESEPQTRSPEFTH) are disordered. The helical transmembrane segment at 287–306 (EHFIQLITGVAVFLGVSFFV) threads the bilayer. The Extracellular segment spans residues 307–318 (LSLILGYSWLEA). The helical transmembrane segment at 319 to 336 (VIFLIGIIVANVPEGLLA) threads the bilayer. The Cytoplasmic portion of the chain corresponds to 337-769 (TVTVCLTLTA…EEGRLIFDNL (433 aa)). The active-site 4-aspartylphosphate intermediate is the aspartate 374. Residues serine 439, serine 450, serine 496, and serine 559 each carry the phosphoserine modification. Threonine 570 is modified (phosphothreonine). A phosphoserine mark is found at serine 587 and serine 672. Mg(2+)-binding residues include aspartate 714 and aspartate 718. The chain crosses the membrane as a helical span at residues 770–789 (KKSIAYTLTSNIPEITPFLL). Over 790 to 799 (FIIANIPLPL) the chain is Extracellular. The helical transmembrane segment at 800 to 820 (GTVTILCIDLGTDMVPAISLA) threads the bilayer. At 821–840 (YEAAESDIMKRQPRNSQTDK) the chain is on the cytoplasmic side. A Phosphoserine modification is found at serine 826. The helical transmembrane segment at 841–863 (LVNERLISMAYGQIGMIQALGGF) threads the bilayer. The Extracellular segment spans residues 864-915 (FTYFVILAENGFLPSRLLGIRLDWDDRTTNDLEDSYGQEWTYEQRKVVEFTC). The helical transmembrane segment at 916-935 (HTAFFASIVVVQWADLIICK) threads the bilayer. The Cytoplasmic portion of the chain corresponds to 936 to 948 (TRRNSVFQQGMKN). Serine 940 carries the post-translational modification Phosphoserine; by PKA. Residues 949–967 (KILIFGLLEETALAAFLSY) traverse the membrane as a helical segment. Over 968–982 (CPGMGVALRMYPLKV) the chain is Extracellular. A helical membrane pass occupies residues 983-1003 (TWWFCAFPYSLLIFIYDEVRK). The Cytoplasmic portion of the chain corresponds to 1004-1020 (LILRRYPGGWVEKETYY).

It belongs to the cation transport ATPase (P-type) (TC 3.A.3) family. Type IIC subfamily. The sodium/potassium-transporting ATPase is composed of a catalytic alpha subunit, an auxiliary non-catalytic beta subunit and an additional regulatory subunit. Interacts with regulatory subunit FXYD1.

It is found in the membrane. It localises to the cell membrane. The enzyme catalyses K(+)(out) + Na(+)(in) + ATP + H2O = K(+)(in) + Na(+)(out) + ADP + phosphate + H(+). Its function is as follows. This is the catalytic component of the active enzyme, which catalyzes the hydrolysis of ATP coupled with the exchange of sodium and potassium ions across the plasma membrane. This action creates the electrochemical gradient of sodium and potassium ions, providing the energy for active transport of various nutrients. This chain is Sodium/potassium-transporting ATPase subunit alpha-2 (Atp1a2), found in Mus musculus (Mouse).